We begin with the raw amino-acid sequence, 180 residues long: Interleukin-17B (180 aa).

Positions 1 to 22 are cleaved as a signal peptide; the sequence is MDWPHSLLFLLAISIFLAPSHP. Residues 22 to 44 are disordered; the sequence is PRNTKGKRKGQGRPSPLAPGPHQ. Over residues 23–32 the composition is skewed to basic residues; the sequence is RNTKGKRKGQ. Asn-75 carries an N-linked (GlcNAc...) asparagine glycan. 2 disulfides stabilise this stretch: Cys-121-Cys-176 and Cys-126-Cys-178.

It belongs to the IL-17 family.

It is found in the secreted. Its function is as follows. Stimulates the release of tumor necrosis factor alpha and IL-1-beta from the monocytic cell line THP-1. The polypeptide is Interleukin-17B (Il17b) (Mus musculus (Mouse)).